Reading from the N-terminus, the 830-residue chain is Isethionate sulfite-lyase (830 aa).

Residues 31–700 (KRVFKLLERF…VVSATPNGRV (670 aa)) form the PFL domain. Residues Arg189, Gln193, 468 to 470 (CIE), and Arg678 each bind 2-hydroxyethane-1-sulfonate. The active-site Cysteine radical intermediate is Cys468. Catalysis depends on Glu470, which acts as the Proton acceptor. Positions 707–830 (DGSSPSHGAD…LIARTGHDQM (124 aa)) constitute a Glycine radical domain. Gly805 carries the post-translational modification Glycine radical.

Belongs to the glycyl radical enzyme (GRE) family. Homodimer. Requires the activating protein IslB to generate the key active site glycyl radical on Gly-805 that is involved in catalysis.

It carries out the reaction 2-hydroxyethane-1-sulfonate = acetaldehyde + sulfite + H(+). Its pathway is organosulfur degradation; alkanesulfonate degradation. Its function is as follows. Involved in an anaerobic respiration pathway that converts the sulfonate taurine (2-aminoethanesulfonate) to ammonia, acetate and sulfide. Catalyzes the radical-mediated C-S bond cleavage of isethionate (2-hydroxyethanesulfonate) to form sulfite and acetaldehyde. Is not able to use any alternate organosulfonate or (S)-1,2-propanediol or choline as a substrate, showing that this enzyme is highly specific for isethionate. The sequence is that of Isethionate sulfite-lyase from Bilophila wadsworthia (strain 3_1_6).